The primary structure comprises 310 residues: NAD-dependent protein deacylase sirtuin-5, mitochondrial (310 aa).

The N-terminal 36 residues, 1–36 (MQPLQIAPCRLLYGLYRGLKSPASTGTRICPAMARP), are a transit peptide targeting the mitochondrion. The Deacetylase sirtuin-type domain maps to 37–307 (SSNMADFRKL…PEALAPHETG (271 aa)). An NAD(+)-binding site is contributed by 58-77 (GAGVSAESGVPTFRGAGGYW). Residues Tyr102 and Arg105 each contribute to the substrate site. 140-143 (QNID) provides a ligand contact to NAD(+). His158 serves as the catalytic Proton acceptor. Zn(2+) contacts are provided by Cys166, Cys169, Cys207, and Cys212. NAD(+) contacts are provided by residues 249–251 (GTS), 275–277 (NME), and Cys293.

Belongs to the sirtuin family. Class III subfamily. As to quaternary structure, monomer. Homodimer. Interacts with CPS1. Interacts with PCCA. The cofactor is Zn(2+).

It is found in the mitochondrion. Its subcellular location is the cytoplasm. It localises to the cytosol. The protein localises to the nucleus. The catalysed reaction is N(6)-malonyl-L-lysyl-[protein] + NAD(+) + H2O = 2''-O-malonyl-ADP-D-ribose + nicotinamide + L-lysyl-[protein]. It carries out the reaction N(6)-succinyl-L-lysyl-[protein] + NAD(+) + H2O = 2''-O-succinyl-ADP-D-ribose + nicotinamide + L-lysyl-[protein]. It catalyses the reaction N(6)-glutaryl-L-lysyl-[protein] + NAD(+) + H2O = 2''-O-glutaryl-ADP-D-ribose + nicotinamide + L-lysyl-[protein]. Functionally, NAD-dependent lysine demalonylase, desuccinylase and deglutarylase that specifically removes malonyl, succinyl and glutaryl groups on target proteins. Activates CPS1 and contributes to the regulation of blood ammonia levels during prolonged fasting: acts by mediating desuccinylation and deglutarylation of CPS1, thereby increasing CPS1 activity in response to elevated NAD levels during fasting. Activates SOD1 by mediating its desuccinylation, leading to reduced reactive oxygen species. Activates SHMT2 by mediating its desuccinylation. Modulates ketogenesis through the desuccinylation and activation of HMGCS2. Has weak NAD-dependent protein deacetylase activity; however this activity may not be physiologically relevant in vivo. Can deacetylate cytochrome c (CYCS) and a number of other proteins in vitro such as UOX. This Canis lupus familiaris (Dog) protein is NAD-dependent protein deacylase sirtuin-5, mitochondrial.